The chain runs to 754 residues: 5-methyltetrahydropteroyltriglutamate--homocysteine methyltransferase (754 aa).

5-methyltetrahydropteroyltri-L-glutamate is bound by residues 15-18 and Lys-114; that span reads RELK. L-homocysteine-binding positions include 430-432 and Glu-483; that span reads IGS. Residues 430–432 and Glu-483 contribute to the L-methionine site; that span reads IGS. 5-methyltetrahydropteroyltri-L-glutamate contacts are provided by residues 514–515 and Trp-560; that span reads RC. Asp-598 serves as a coordination point for L-homocysteine. L-methionine is bound at residue Asp-598. A 5-methyltetrahydropteroyltri-L-glutamate-binding site is contributed by Glu-604. Positions 641, 643, and 665 each coordinate Zn(2+). The Proton donor role is filled by His-694. Cys-726 provides a ligand contact to Zn(2+).

The protein belongs to the vitamin-B12 independent methionine synthase family. Zn(2+) is required as a cofactor.

It carries out the reaction 5-methyltetrahydropteroyltri-L-glutamate + L-homocysteine = tetrahydropteroyltri-L-glutamate + L-methionine. It functions in the pathway amino-acid biosynthesis; L-methionine biosynthesis via de novo pathway; L-methionine from L-homocysteine (MetE route): step 1/1. Catalyzes the transfer of a methyl group from 5-methyltetrahydrofolate to homocysteine resulting in methionine formation. The protein is 5-methyltetrahydropteroyltriglutamate--homocysteine methyltransferase of Campylobacter jejuni subsp. jejuni serotype O:2 (strain ATCC 700819 / NCTC 11168).